The following is a 583-amino-acid chain: Ferredoxin--nitrite reductase, chloroplastic (583 aa).

The transit peptide at 1–22 (MSSLSVRFLSPPLFSSTPAWPR) directs the protein to the chloroplast. The [4Fe-4S] cluster site is built by Cys461, Cys467, Cys502, and Cys506. Cys506 serves as a coordination point for siroheme.

Belongs to the nitrite and sulfite reductase 4Fe-4S domain family. In terms of assembly, monomer. It depends on siroheme as a cofactor. [4Fe-4S] cluster serves as cofactor.

It localises to the plastid. Its subcellular location is the chloroplast. The enzyme catalyses 6 oxidized [2Fe-2S]-[ferredoxin] + NH4(+) + 2 H2O = nitrite + 6 reduced [2Fe-2S]-[ferredoxin] + 8 H(+). It functions in the pathway nitrogen metabolism; nitrate reduction (assimilation). This is Ferredoxin--nitrite reductase, chloroplastic (NIR1) from Betula pendula (European white birch).